The chain runs to 237 residues: Ribosomal RNA small subunit methyltransferase G (237 aa).

S-adenosyl-L-methionine contacts are provided by residues Gly78, Phe83, 129–130 (AE), and Arg148. Residues 216-237 (SKKKETPNKYPRKAGTPNKKPL) are disordered.

The protein belongs to the methyltransferase superfamily. RNA methyltransferase RsmG family.

The protein localises to the cytoplasm. Its function is as follows. Specifically methylates the N7 position of a guanine in 16S rRNA. The protein is Ribosomal RNA small subunit methyltransferase G of Streptococcus agalactiae serotype V (strain ATCC BAA-611 / 2603 V/R).